We begin with the raw amino-acid sequence, 177 residues long: Probasin (177 aa).

The N-terminal stretch at 1 to 17 (MRVILLLLTLDVLGVSS) is a signal peptide. A disulfide bond links C79 and C170.

This sequence belongs to the calycin superfamily. Lipocalin family. Prostatic epithelial cells.

The protein resides in the nucleus. It is found in the secreted. This chain is Probasin (Pbsn), found in Rattus norvegicus (Rat).